A 226-amino-acid polypeptide reads, in one-letter code: MVLKAIVIDIDGTITNPDRSLDLDVAKRFRELNVPVILSTGNPLCYVHAAAKLIGISGIVIAENGGVISTGFDSPSIIADGKEECEKAYELLSQYHDLVKLDDAYRKTEVVLNRDVAVEDLRSTLSENGIDIEIIDTGYAIHIKSTAMNKGTGLLKVAELMGLEPTDYLAIGDSCNDAEMMQVAGFGIAVANADSDAIKAARHITKASFGKGALEAIEYALSNGLL.

Asp-9 serves as the catalytic Nucleophile. Positions 9 and 11 each coordinate Mg(2+). Residue Lys-150 participates in substrate binding. 2 residues coordinate Mg(2+): Asp-173 and Asp-177.

The protein belongs to the archaeal SPP-like hydrolase family. The cofactor is Mg(2+).

It catalyses the reaction 2-phosphoglycolate + H2O = glycolate + phosphate. Catalyzes the dephosphorylation of 2-phosphoglycolate. This Methanococcoides burtonii (strain DSM 6242 / NBRC 107633 / OCM 468 / ACE-M) protein is Phosphoglycolate phosphatase.